Reading from the N-terminus, the 231-residue chain is ATP phosphoribosyltransferase (231 aa).

This sequence belongs to the ATP phosphoribosyltransferase family. Short subfamily. Heteromultimer composed of HisG and HisZ subunits.

Its subcellular location is the cytoplasm. The catalysed reaction is 1-(5-phospho-beta-D-ribosyl)-ATP + diphosphate = 5-phospho-alpha-D-ribose 1-diphosphate + ATP. It functions in the pathway amino-acid biosynthesis; L-histidine biosynthesis; L-histidine from 5-phospho-alpha-D-ribose 1-diphosphate: step 1/9. Catalyzes the condensation of ATP and 5-phosphoribose 1-diphosphate to form N'-(5'-phosphoribosyl)-ATP (PR-ATP). Has a crucial role in the pathway because the rate of histidine biosynthesis seems to be controlled primarily by regulation of HisG enzymatic activity. The protein is ATP phosphoribosyltransferase of Sinorhizobium medicae (strain WSM419) (Ensifer medicae).